Reading from the N-terminus, the 208-residue chain is FMN-dependent NADH:quinone oxidoreductase 2 (208 aa).

It belongs to the azoreductase type 1 family. Homodimer. The cofactor is FMN.

The enzyme catalyses 2 a quinone + NADH + H(+) = 2 a 1,4-benzosemiquinone + NAD(+). It carries out the reaction N,N-dimethyl-1,4-phenylenediamine + anthranilate + 2 NAD(+) = 2-(4-dimethylaminophenyl)diazenylbenzoate + 2 NADH + 2 H(+). Functionally, quinone reductase that provides resistance to thiol-specific stress caused by electrophilic quinones. In terms of biological role, also exhibits azoreductase activity. Catalyzes the reductive cleavage of the azo bond in aromatic azo compounds to the corresponding amines. The polypeptide is FMN-dependent NADH:quinone oxidoreductase 2 (Bacillus cereus (strain ATCC 10987 / NRS 248)).